Here is a 73-residue protein sequence, read N- to C-terminus: UPF0057 membrane protein At4g30650 (73 aa).

Transmembrane regions (helical) follow at residues 4-24 (NMEV…GVCL) and 37-57 (LVLT…VIVF).

It belongs to the UPF0057 (PMP3) family.

It localises to the membrane. This Arabidopsis thaliana (Mouse-ear cress) protein is UPF0057 membrane protein At4g30650.